The chain runs to 345 residues: MSIAVGLSACALSSVLFGSMFVPVKKCHSGNGIFVQWIMSTAILLVGIVVYSTQGFPEFEPLAMLGGMFWALGNATAVPIMNTIGIGMGMLVWGTTNCVAGWAAGRFGLFGINSTVPEYPFLNYFGLVLVVFGGFLFSQIRPNEPQTASERSPLMVAPDDDLTDDVAPDDSDIVVPRGGAVPTRAHRNQKRLLAIITSLVAGVFYGFTFVPVIYIQDHPEIYPTAPKTGLGYVFSHYIGIFCTASALMIGYVIYSRNNPFASSRLVGPSMTAGSMWGIAQASWFVANDNLSQAVSFPIISMVPGVIAALWSVFYFRDISGSRNLRLLSIAVAITLIGAICVGVSK.

Transmembrane regions (helical) follow at residues 3–23, 32–52, 61–81, 84–104, 120–140, 193–213, 233–253, 265–285, 293–313, and 324–344; these read IAVG…MFVP, GIFV…VVYS, PLAM…VPIM, IGIG…GWAA, PFLN…FSQI, LAII…VPVI, VFSH…GYVI, LVGP…SWFV, AVSF…WSVF, and LRLL…VGVS.

Belongs to the TMEM144 family.

The protein resides in the membrane. In Caenorhabditis elegans, this protein is Transmembrane protein 144 homolog.